The sequence spans 257 residues: 4-chloro-allylglycine synthase (257 aa).

Fe cation contacts are provided by Glu112, His119, Glu173, His203, Glu207, and His210.

Fe(2+) serves as cofactor.

It catalyses the reaction 4-chloro-L-lysine + AH2 + O2 = L-2-amino-4-chloropent-4-enoate + formaldehyde + A + NH4(+) + H2O. It functions in the pathway amino-acid metabolism. Its pathway is antibiotic biosynthesis. Involved in the biosynthesis of terminal alkyne-containing amino acids such as L-propargylglycine (Pra) and L-beta-ethynylserine, that are produced as antibiotics by S.cattleya. Catalyzes an oxidative C-C bond cleavage in 4-chloro-L-lysine to form 4-chloro-allyl-L-glycine (also named L-2-amino-4-chloropent-4-enoate), with release of formaldehyde and ammonia. Is also able to react with L-lysine directly to produce allylglycine in vitro. The chain is 4-chloro-allylglycine synthase from Streptantibioticus cattleyicolor (strain ATCC 35852 / DSM 46488 / JCM 4925 / NBRC 14057 / NRRL 8057) (Streptomyces cattleya).